The chain runs to 132 residues: Small ribosomal subunit protein uS8 (132 aa).

This sequence belongs to the universal ribosomal protein uS8 family. As to quaternary structure, part of the 30S ribosomal subunit. Contacts proteins S5 and S12.

Its function is as follows. One of the primary rRNA binding proteins, it binds directly to 16S rRNA central domain where it helps coordinate assembly of the platform of the 30S subunit. This chain is Small ribosomal subunit protein uS8, found in Rhodospirillum centenum (strain ATCC 51521 / SW).